A 171-amino-acid chain; its full sequence is 3-hydroxydecanoyl-[acyl-carrier-protein] dehydratase (171 aa).

The active site involves H70.

Belongs to the thioester dehydratase family. FabA subfamily. In terms of assembly, homodimer.

It is found in the cytoplasm. It carries out the reaction a (3R)-hydroxyacyl-[ACP] = a (2E)-enoyl-[ACP] + H2O. It catalyses the reaction (3R)-hydroxydecanoyl-[ACP] = (2E)-decenoyl-[ACP] + H2O. The enzyme catalyses (2E)-decenoyl-[ACP] = (3Z)-decenoyl-[ACP]. It functions in the pathway lipid metabolism; fatty acid biosynthesis. Necessary for the introduction of cis unsaturation into fatty acids. Catalyzes the dehydration of (3R)-3-hydroxydecanoyl-ACP to E-(2)-decenoyl-ACP and then its isomerization to Z-(3)-decenoyl-ACP. Can catalyze the dehydratase reaction for beta-hydroxyacyl-ACPs with saturated chain lengths up to 16:0, being most active on intermediate chain length. The protein is 3-hydroxydecanoyl-[acyl-carrier-protein] dehydratase of Shewanella sp. (strain ANA-3).